We begin with the raw amino-acid sequence, 160 residues long: Protein shisa-like-2B (160 aa).

A helical transmembrane segment spans residues 65-85; that stretch reads IGALIGLGIAALVLLAFVISV.

It belongs to the shisa family.

The protein localises to the membrane. This Homo sapiens (Human) protein is Protein shisa-like-2B.